We begin with the raw amino-acid sequence, 373 residues long: Glutamate 5-kinase (373 aa).

Lys-15 is an ATP binding site. Substrate-binding residues include Ser-55, Asp-142, and Asn-154. Residues 174–175 and 216–222 each bind ATP; these read TD and TGGMATK. One can recognise a PUA domain in the interval 281–359; sequence AGSIVVDAGA…SEIEGILGFR (79 aa).

Belongs to the glutamate 5-kinase family.

It localises to the cytoplasm. The enzyme catalyses L-glutamate + ATP = L-glutamyl 5-phosphate + ADP. It functions in the pathway amino-acid biosynthesis; L-proline biosynthesis; L-glutamate 5-semialdehyde from L-glutamate: step 1/2. Catalyzes the transfer of a phosphate group to glutamate to form L-glutamate 5-phosphate. The sequence is that of Glutamate 5-kinase from Citrifermentans bemidjiense (strain ATCC BAA-1014 / DSM 16622 / JCM 12645 / Bem) (Geobacter bemidjiensis).